Reading from the N-terminus, the 247-residue chain is Probable transcriptional regulatory protein BHWA1_01533 (247 aa).

Positions M1–G22 are disordered.

This sequence belongs to the TACO1 family.

The protein resides in the cytoplasm. This chain is Probable transcriptional regulatory protein BHWA1_01533, found in Brachyspira hyodysenteriae (strain ATCC 49526 / WA1).